We begin with the raw amino-acid sequence, 300 residues long: Porphobilinogen deaminase (300 aa).

Cysteine 239 bears the S-(dipyrrolylmethanemethyl)cysteine mark.

It belongs to the HMBS family. As to quaternary structure, monomer. It depends on dipyrromethane as a cofactor.

The catalysed reaction is 4 porphobilinogen + H2O = hydroxymethylbilane + 4 NH4(+). The protein operates within porphyrin-containing compound metabolism; protoporphyrin-IX biosynthesis; coproporphyrinogen-III from 5-aminolevulinate: step 2/4. Tetrapolymerization of the monopyrrole PBG into the hydroxymethylbilane pre-uroporphyrinogen in several discrete steps. The polypeptide is Porphobilinogen deaminase (Francisella tularensis subsp. novicida (strain U112)).